The sequence spans 314 residues: 4-hydroxy-3-methylbut-2-enyl diphosphate reductase (314 aa).

Cys12 lines the [4Fe-4S] cluster pocket. (2E)-4-hydroxy-3-methylbut-2-enyl diphosphate contacts are provided by His41 and His74. Dimethylallyl diphosphate contacts are provided by His41 and His74. The isopentenyl diphosphate site is built by His41 and His74. Residue Cys96 participates in [4Fe-4S] cluster binding. Residue His124 participates in (2E)-4-hydroxy-3-methylbut-2-enyl diphosphate binding. His124 serves as a coordination point for dimethylallyl diphosphate. His124 is a binding site for isopentenyl diphosphate. Glu126 functions as the Proton donor in the catalytic mechanism. Thr168 contacts (2E)-4-hydroxy-3-methylbut-2-enyl diphosphate. Cys198 is a binding site for [4Fe-4S] cluster. Residues Ser226, Ser227, Asn228, and Ser270 each contribute to the (2E)-4-hydroxy-3-methylbut-2-enyl diphosphate site. 4 residues coordinate dimethylallyl diphosphate: Ser226, Ser227, Asn228, and Ser270. 4 residues coordinate isopentenyl diphosphate: Ser226, Ser227, Asn228, and Ser270.

Belongs to the IspH family. [4Fe-4S] cluster is required as a cofactor.

It catalyses the reaction isopentenyl diphosphate + 2 oxidized [2Fe-2S]-[ferredoxin] + H2O = (2E)-4-hydroxy-3-methylbut-2-enyl diphosphate + 2 reduced [2Fe-2S]-[ferredoxin] + 2 H(+). The enzyme catalyses dimethylallyl diphosphate + 2 oxidized [2Fe-2S]-[ferredoxin] + H2O = (2E)-4-hydroxy-3-methylbut-2-enyl diphosphate + 2 reduced [2Fe-2S]-[ferredoxin] + 2 H(+). It functions in the pathway isoprenoid biosynthesis; dimethylallyl diphosphate biosynthesis; dimethylallyl diphosphate from (2E)-4-hydroxy-3-methylbutenyl diphosphate: step 1/1. It participates in isoprenoid biosynthesis; isopentenyl diphosphate biosynthesis via DXP pathway; isopentenyl diphosphate from 1-deoxy-D-xylulose 5-phosphate: step 6/6. Catalyzes the conversion of 1-hydroxy-2-methyl-2-(E)-butenyl 4-diphosphate (HMBPP) into a mixture of isopentenyl diphosphate (IPP) and dimethylallyl diphosphate (DMAPP). Acts in the terminal step of the DOXP/MEP pathway for isoprenoid precursor biosynthesis. This chain is 4-hydroxy-3-methylbut-2-enyl diphosphate reductase, found in Pseudomonas aeruginosa (strain LESB58).